Here is a 1933-residue protein sequence, read N- to C-terminus: WD repeat-containing protein 81 (1933 aa).

The tract at residues 1–643 (MAQGSRRRKV…TPCESGWTRE (643 aa)) is necessary and sufficient for the interaction with SQSTM1. Disordered stretches follow at residues 305 to 334 (PSED…RPGC), 663 to 714 (SIPG…GKIV), 1038 to 1057 (CAFG…SGLG), 1090 to 1209 (QPQE…EGKE), 1517 to 1544 (SLRN…SCLQ), and 1565 to 1590 (DSQP…SRNE). Residues 314 to 330 (SEEKDRTGVKSEKDGEG) show a composition bias toward basic and acidic residues. Positions 333 to 610 (GCPTCQKELR…IPRLLVQPIQ (278 aa)) constitute a BEACH domain. Residues 668-693 (AGDQPGSSSSQASPGLLPFSAPSGSR) show a composition bias toward low complexity. Polar residues-rich tracts occupy residues 1100 to 1112 (GQLS…SEAS) and 1131 to 1140 (VKSGDSSQDL). Over residues 1145–1166 (GSEEEEEEEEGCVVLEEEEQDE) the composition is skewed to acidic residues. WD repeat units lie at residues 1638–1677 (GHTG…DGTS), 1684–1724 (IYAQ…TLRT), 1776–1815 (LNPG…VLRG), 1818–1856 (AHEG…PTHH), and 1903–1933 (NFRG…RLLA).

It belongs to the WD repeat WDR81 family. In terms of assembly, interacts with WDR91; involved in early to late endosome cargo transport. Interacts with BECN1; negatively regulates the PI3 kinase/PI3K activity associated with endosomal membranes. Interacts with SQSTM1; the interaction is direct and regulates the interaction of SQSTM1 with ubiquitinated proteins. Interacts with MAP1LC3C; recruits MAP1LC3C to ubiquitinated protein aggregates in the aggrephagy process.

The protein localises to the early endosome membrane. It localises to the late endosome membrane. Its subcellular location is the lysosome membrane. It is found in the cytoplasmic vesicle. The protein resides in the autophagosome membrane. The protein localises to the mitochondrion. It localises to the cytoplasm. Its subcellular location is the cytosol. In terms of biological role, functions as a negative regulator of the PI3 kinase/PI3K activity associated with endosomal membranes via BECN1, a core subunit of the PI3K complex. By modifying the phosphatidylinositol 3-phosphate/PtdInsP3 content of endosomal membranes may regulate endosome fusion, recycling, sorting and early to late endosome transport. It is for instance, required for the delivery of cargos like BST2/tetherin from early to late endosome and thereby participates indirectly to their degradation by the lysosome. May also play a role in aggrephagy, the macroautophagic degradation of ubiquitinated protein aggregates. In this process, may regulate the interaction of SQSTM1 with ubiquitinated proteins and also recruit MAP1LC3C. May also be involved in maintenance of normal mitochondrial structure and organization. The chain is WD repeat-containing protein 81 from Rattus norvegicus (Rat).